A 660-amino-acid chain; its full sequence is Probable cation-transporting P-type ATPase J (660 aa).

Helical transmembrane passes span 33–53, 60–80, 94–114, 261–281, and 292–312; these read WAAL…CGAP, LFLA…LQAL, AAIG…IVIF, IGMV…GETL, and MIVA…LAAI. Asp340 (4-aspartylphosphate intermediate) is an active-site residue. Asp544 and Asp548 together coordinate Mg(2+). Residues 598 to 618 form a helical membrane-spanning segment; sequence IVVANLIVAVTFIAGLVVWDL.

The protein belongs to the cation transport ATPase (P-type) (TC 3.A.3) family. Type IB subfamily.

The protein resides in the cell membrane. It carries out the reaction ATP + H2O = ADP + phosphate + H(+). This chain is Probable cation-transporting P-type ATPase J (ctpJ), found in Mycobacterium tuberculosis (strain CDC 1551 / Oshkosh).